Consider the following 760-residue polypeptide: ATP-dependent DNA helicase Hel308 (760 aa).

ATP-binding positions include Gln-28 and 46–53 (IPTASGKT). The 167-residue stretch at 33 to 199 (EMGLLEKKNL…WLGAALVLSE (167 aa)) folds into the Helicase ATP-binding domain. Residues 144 to 147 (DEIH) carry the DEAH box motif. A Helicase C-terminal domain is found at 232 to 426 (AVNLVLDTIK…SKLGTENALR (195 aa)).

It belongs to the helicase family. Hel308 subfamily. As to quaternary structure, monomer.

The catalysed reaction is Couples ATP hydrolysis with the unwinding of duplex DNA by translocating in the 3'-5' direction.. It catalyses the reaction ATP + H2O = ADP + phosphate + H(+). Functionally, DNA-dependent ATPase and 3'-5' DNA helicase that may be involved in repair of stalled replication forks. This chain is ATP-dependent DNA helicase Hel308, found in Methanococcoides burtonii (strain DSM 6242 / NBRC 107633 / OCM 468 / ACE-M).